The following is a 4363-amino-acid chain: MELNDDPTGKIISGVNDISLPSLSAKQVAQSLSEQLSTSALPAIQSFSFPPLPNGLSETFHDKKMDLSYAFPRKLMSALEVSSMFCAAWAIAVDRYTTNDDVVFGAFLQDIPNPGLVPLRLKTRSETDVGGLLHYVISEITQSCNYPYLGKEKSSELSTERQDSHEVGAMLVFGKSGAGESNVLYEKPITCALTITCTLAGDQLHIGASYDSRVIEAPMLTRVLRQFGYLATQLADANPTRRLTDIAQELNRQDLEDIWKTNMEITTESGALIQEIFAGQAKQRPHAIAVEAWDGVLSYGQLESLSTGLAHALLQLGIKDHSLIPFCLKNSKWAVVAMLGILKANCTFVPIDSSSPWDRRNRILELTHAEVIITSSFMSDDNLWNTSVLCLTEETVSGFPVLSNLPGRISGPGSAAYVLFTSGSTGDPKGVVVAHSAICNSLHAIGSKIGLDETSRTLQFTSLAFDISIFEILGTLIFGGTICVPSEDDRLTRLPEYIVSAQVNTASLTPSVARLYDAAMVPCLNTLILGGEAMTRADIKNWCRLPNLFNGFGPTETAIGCAMHRVHAEQKQHSLIGRLAGIPVWVVDPSDHEVLVPFGAVGELVVEGTTLALGYLDDDIKTQAAFIQDPPWLLRGCGVELPGRRGRIYKTGDLVQYNEEGSLLYVGRKDSDTQVKIRGNRVDLGEIESHLHECLPSRSEVVVDVVLPSDAPTSSDHILAVFLRYEGVNTLQDSTERTIPTKLIQVPEGIQKHLYSKLPAYMVPTVYFSVAVIPKMISGKTDRKRLRGMASLFSMQELAANSSHQTVKRAPDSVIARQLQGIWAQVLHVDPLAIGMDDSFFALGGDSIAAIRLVREARQTFSIGLTVADIFSFPSLGALAAIAKVIPLIDPGPSPAFTSLRGVSSITDLLKDVAESCGLKQPSLIEDVYACTPLQEGLLALSSKHSGTYTVQRVLELAPDVDIARFQAAWETTARCTPIMRTRIVQHVELGLLQAVVDEDIEWKTLPSEQLDSFLLADQKTSMALGQPLMRYALTQGPYSGTHGSRHLVWTVHHALYDGWSLPLLLERVRQAYYGEQPQLSEFAPFIRWCEQDVDEDSAARHWQTYLEEADESALFPPLPPSITEPIEDQQAENRWALPEHGTTAVTRSIVLRAAWAIVASRYTSSNDVLFGTTVSGRGAPVPGIEEMVGPTVATVPTRCKIDDNKSASSFLLEVQQAAVEAIPFEQTGLKRISEIDTRLRRVREIQTFLVVQPAEYGEAAFEGLGKWVNGPGYYRLDVSALTLECVLTESGVRCVAYFDSHVIQAATVTRALAQFAHVSQQLCTASPNTTLGQIDVLTSSDLRDIWNWNGPLLQLAEEPLPHVDIGKQARTRPGAIAVHSWDAQLTYQELDKYSSLLAKQLLDADVKGGDIVPLYFEPSAWVVVAMLAVLKSGAAFTPIDTSQPEQRRNRIVSQLQPSIGLVSARHATTVFGPGWATLEVSRRALSSMPEGPLGQVDASSIAWVIFTSGSTGLPKGAMLQHSAVHTSHRALGATFGLCANTRMLQFSSFAFDACVLEIVATLMHGGCVCIPSELQQRSLSELPSVCAAMEVNTMVLTPTVARLFGPSDFPDLTTLVLTGEPLVQSDVTKWSSIAYVANGYGPAECSNICTVHRIAPDDTDPNRIGSLRGVPNWVVHSRNHHQLTPIGGVGELLIEGATVGHGYLNDAEKTAAAFVTDPAWLTEISHALPCFERHGRLYKTGDIVKLHEDGSLSYLGRKDTQIKIHGQRIELGEIEHHVLHCTKAVEVTVDAVYVPGEEKNKSLVAFVRPSNGTSTPQFYDNPDAIINELANSLPAYMIPTMYIQVPSIPRTASGKTDRKQLREMGTAMASSHAARHWKHQNRPPVTDMEKHVQKLWARVLTLENAGEISLDDSFIRLGGDSIAAMKLVSLAAKAGLGLTVAQIFRHTKLEDQARHVTLLTQGGPAPIAQFSLLPDSPDVKALQADIARAYAIEASSIEDVYPCTPLQEGLLSLSSKPSEYNTYTLQHVFELPPTVDIQQLRSAWEETIRTTDILRTRIVLHPRYGLVQVVVKEEIQWHEPANADVYIETDKQVQMVLGSSLVRYAISPDTGSASRKFIWTIHHALADGWTLDLILRKVKLAYSTLHTVSPVSEFRSFVKYITTRNTDEMVEYWKSTLGGYHSTTFPALPSSVRYAIEDSEVGQKHELPRNITLSAHPLSTLLRAAWAIVQSNYSNTSDVVFGEVFSGRSASVPFIEAIVGPTMATLPVRVKIDDSELAREMLDRLLTTTTQMIPHEQLGLQRISQINTDCQAACSFQTLLVIQPPASTHNGQEEPSLSFSGSPDYRLATYALGIECTPASDGYSFSCRARFDSRVLSAQVAERMMAQLGHVVSQLVAVTASPSSSTLVSDIVLNTPQDLEKLWAWNEAVLELGEEQKHSMLLHQVFRKKALAAPQATAISSWDGECSYAQLEKLSDALAAMLTDLGIGIGLDQQLVPLCFERSMWVVVAMMAVLKTGAGIVPLDPAHPPSRHERILAKVGIGGCILVSPQYAQRQFGEGWTTMVVSEASAAAVPSIHAFDPPTVTHLAVCWILFTSGSTGEPKGIYLEHGAICASYKLLGKTLGIDKETRMLHFSAYAFDIATFEIIGTLMSGGCICIPSDAERLERLPQFCTTFAVNTAILTPSVARLYTPNDIPTLRSLCLAGEAPNKQDISTWQHRIPFLFNCYGPAEAACLAATNRIGPNDADRSATRIGRLRGVPLWITAPGNCRKLAPIGAVGELLIEGSTLARGYLDPTQTDAAFIEDPEWLLQGPAGERSGRRGRLYRTGDLARYDEDGGVVYEGRKDNQVKIRGQRTELGEIEYHLSQCFPTAAEVVVEVATSERDLASVTLVAFVKSRETRDSSEKVPAGIFALPSKLEHEINRRLPLYMIPAVFVSVPEIPKTATDKTDRQKLRELASVYATRAVDAPHHQPQRLPSTVMEETLRDLWLKVIPVRQTAIGLDSNFFRLGGDSIAALKLVGQAQQAGIELSSKDIFLNPKLVDLAACCTDRRCVKEGSRMVAKHATISRFSLLPINASISSIVDEVANACGIPPRLVEDVYPCTPMQEGLMSLSSRNPGTYVSQIAIELAPDVLVDLFKLAWQQTVSTMPILRSRIIQHPKLGFLQAVLKEDVTWNNSTDLDEYLETDSSTPMGFGSELSRHALVWDNSGKHIRFVWTVHHSIYDHVTLRLILDDVYDNYKGNERKDFQPYTSFVRSVISMKSSESEEFWRNACKDEGSSIFPQRSLSIRESCEDTTVEQSYQLCTTATGVTMANVLHAAWAVVSSWHVGNQSIVFGTVLSGRTAPVLGIENIAGPTIATAPFPVIIDPSETISNFLQRIQGQMAAVIPHAQLGLQRISRLSSACELACNFQTLFAVQEGRAMVGNSLGKLLDVNTFSMRTYALTLDCFLDTEGFHVKASFDSRVVDQWRMESILRQFGAVAQQLATKAEGGELVSSIETLNEQGWELLRRWNSHRTHKQWAVFPEDCEKPSPIGAIGELLIEGPDFPSKYLEDPGARKVRSPRWMDRNGHKTVLLTGILVAFDQNGNSIHIGQKRTTISFKGQRIDVSQIERHITSFLAGTEAVVEAIAIPSAENSQSVLAVFLHRPELADRGDNKSRPAICWSKDYGDIEKNLSVVFPDMVPTLYIDMEAMPRTSHGDIDRSQLQTLGSLFPAEKVAILRASRQKRPAVTAMQLAIRGLWASLLGAKEDTFHLDDDFFKSGGDSIGVIKLVGEARKRNIALAAADIFQYPKLESLAVRATENTLSQAEELEEPFSLITSYVDDADRIEDFLSSNILSRIPYAREALQDVLPCTSMQKQLFHAQGQIYRFVLDFGDAQIDAHRLEHAVHGLIDRHAILRTLFVPYQTDLLQVVVSPGKLKGRFVAETLGDGDEIEAAVERVVSADKADTNITGCPMPQFIFLSKRSKTEGFQSKLIIARFSHMQFDGYSVPFVIRDLATLYAATTSNTNTLDADEERTLIVASETLPPAPQFSSYIYAHYSTSSLERRKYWMRLLRASYMTPITVKCDTPERIYNHTRYENRTVELEAWYRIASSGQSSPDDILTMAWALTLSIASEESDIVFGRTVAGRRALFIPHGGADDIMGPCVNTIPVRVQLPSTTEQEEVDKSMTLRDLLAEIHKQTKETLPFESTGLDEIVEHYAPSIWKKKPRRWTSTVVWQDFAGMQAVQHTVHRRSGNHEPNGEEKYEKVGQEDGSVALGYMDPFAASSNVAFADLTCRVTCEIPLFDPADVAVIGRLVDGSPCFALGFAPERVPEPTIKRLADTLMAVVLCLAEHPETSVKHLLRAQRENWRSIRELPNV.

The interval 278–670 (AGQAKQRPHA…GSLLYVGRKD (393 aa)) is adenylation 1. The Carrier 1 domain occupies 810-887 (APDSVIARQL…ALAAIAKVIP (78 aa)). S847 bears the O-(pantetheine 4'-phosphoryl)serine mark. Residues 926–1340 (EDVYACTPLQ…TLGQIDVLTS (415 aa)) form a condensation 1 region. An adenylation 2 region spans residues 1368-1765 (KQARTRPGAI…LGRKDTQIKI (398 aa)). The Carrier 2 domain occupies 1884-1961 (PPVTDMEKHV…DQARHVTLLT (78 aa)). S1922 is modified (O-(pantetheine 4'-phosphoryl)serine). The interval 1999-2410 (EDVYPCTPLQ…ASPSSSTLVS (412 aa)) is condensation 2. Residues 2448–2853 (RKKALAAPQA…GRKDNQVKIR (406 aa)) form an adenylation 3 region. In terms of domain architecture, Carrier 3 spans 2977–3053 (LPSTVMEETL…DLAACCTDRR (77 aa)). S3014 is modified (O-(pantetheine 4'-phosphoryl)serine). Residues 3098–3503 (VEDVYPCTPM…ELVSSIETLN (406 aa)) form a condensation 3 region. The 77-residue stretch at 3730–3806 (PAVTAMQLAI…SLAVRATENT (77 aa)) folds into the Carrier 4 domain. Position 3767 is an O-(pantetheine 4'-phosphoryl)serine (S3767). Positions 3850–4204 (QDVLPCTSMQ…GLDEIVEHYA (355 aa)) are condensation 4.

This sequence belongs to the NRP synthetase family.

Its pathway is mycotoxin biosynthesis. Nonribosomal peptide synthetase; part of the gene clusters that mediate the biosynthesis of AM-toxins, host-selective toxins (HSTs) causing Alternaria blotch on apple, a worldwide distributed disease. AM-toxins are cyclic depsipeptides containing the 3 residues 2-hydroxy-isovaleric acid (2-HIV), dehydroalanine, L-alanine which are common for all 3 AM-toxins I to III. The fourth precursor is L-alpha-amino-methoxyphenyl-valeric acid (L-Amv) for AM-toxin I, L-alpha-amino-phenyl-valeric acid (L-Apv) for AM-toxin II, and L-alpha-amino-hydroxyphenyl-valeric acid (L-Ahv) for AM-toxin III. AM-toxins have two target sites for affecting susceptible apple cells; they cause invagination of the plasma membrane and electrolyte loss, and chloroplast disorganization. The non-ribosomal peptide synthetase AMT1 contains 4 catalytic modules and is responsible for activation of each residue in AM-toxin. The aldo-keto reductase AMT2 catalyzes the conversion of 2-keto-isovaleric acid (2-KIV) to 2-hydroxy-isovaleric acid (2-HIV), one of the precursor residues incorporated by AMT1 during AM-toxin biosynthesis, by reduction of its ketone to an alcohol. The cytochrome P450 monooxygenase AMT3 and the thioesterase AMT4 are also important for AM-toxin production, but their exact function within the AM-toxin biosynthesis are not known yet. Up to 21 proteins (including AMT1 to AMT4) are predicted to be involved in AM-toxin biosynthesis since their expression ishighly up-regulated in AM-toxin-producing cultures. This Alternaria alternata (Alternaria rot fungus) protein is AM-toxin synthetase AMT1.